A 400-amino-acid polypeptide reads, in one-letter code: Diphosphomevalonate decarboxylase (400 aa).

Residues 19-22 (YWGK), Arg75, 154-159 (SGSACR), and Thr210 contribute to the (R)-5-diphosphomevalonate site. The tract at residues 381–400 (DGPRTLGPEEALLSPDGLPK) is disordered.

The protein belongs to the diphosphomevalonate decarboxylase family.

The enzyme catalyses (R)-5-diphosphomevalonate + ATP = isopentenyl diphosphate + ADP + phosphate + CO2. It functions in the pathway isoprenoid biosynthesis; isopentenyl diphosphate biosynthesis via mevalonate pathway; isopentenyl diphosphate from (R)-mevalonate: step 3/3. Its function is as follows. Diphosphomevalonate decarboxylase; part of the second module of ergosterol biosynthesis pathway that includes the middle steps of the pathway. The second module involves the formation of farnesyl diphosphate, which is also an important intermediate in the biosynthesis of ubiquinone, dolichol, heme and prenylated proteins. This module also plays a key role in the biosynthesis of triterpenes such as ganoderic acids (GA), a group of highly oxygenated lanostane-type triterpenoids which are well recognized as a main group of unique bioactive compounds in the medicinal mushroom Ganoderma lucidum. Activity by the mevalonate kinase first converts mevalonate into 5-phosphomevalonate. 5-phosphomevalonate is then further converted to 5-diphosphomevalonate by the phosphomevalonate kinase. The diphosphomevalonate decarboxylase MVD then produces isopentenyl diphosphate. The isopentenyl-diphosphate delta-isomerase then catalyzes the 1,3-allylic rearrangement of the homoallylic substrate isopentenyl (IPP) to its highly electrophilic allylic isomer, dimethylallyl diphosphate (DMAPP). Finally the farnesyl diphosphate synthase FPS catalyzes the sequential condensation of isopentenyl pyrophosphate with dimethylallyl pyrophosphate, and then with the resultant geranylpyrophosphate to the ultimate product farnesyl pyrophosphate. In Ganoderma lucidum (Ling zhi medicinal fungus), this protein is Diphosphomevalonate decarboxylase.